The primary structure comprises 750 residues: GTP pyrophosphokinase rsh (750 aa).

The HD domain occupies tyrosine 45–methionine 144. The region spanning aspartate 390–arginine 451 is the TGS domain. A disordered region spans residues alanine 587 to leucine 613. The 75-residue stretch at arginine 676 to glycine 750 folds into the ACT domain.

This sequence belongs to the RelA/SpoT family.

The catalysed reaction is GTP + ATP = guanosine 3'-diphosphate 5'-triphosphate + AMP. Functions as a (p)ppGpp synthase. In eubacteria ppGpp (guanosine 3'-diphosphate 5'-diphosphate) is a mediator of the stringent response that coordinates a variety of cellular activities in response to changes in nutritional abundance. It is necessary for persistence in mice, essential for intracellular growth of Brucella and required for expression of the type IV secretion system VirB and therefore plays a role in adaptation of Brucella to its intracellular host environment. The chain is GTP pyrophosphokinase rsh (rsh) from Brucella suis biovar 1 (strain 1330).